A 424-amino-acid polypeptide reads, in one-letter code: Enolase (424 aa).

Gln165 is a (2R)-2-phosphoglycerate binding site. Glu207 (proton donor) is an active-site residue. Residues Asp244, Glu283, and Asp310 each contribute to the Mg(2+) site. Residues Lys335, Arg364, Ser365, and Lys386 each coordinate (2R)-2-phosphoglycerate. Lys335 acts as the Proton acceptor in catalysis.

Belongs to the enolase family. Mg(2+) serves as cofactor.

It is found in the cytoplasm. The protein resides in the secreted. It localises to the cell surface. It carries out the reaction (2R)-2-phosphoglycerate = phosphoenolpyruvate + H2O. It functions in the pathway carbohydrate degradation; glycolysis; pyruvate from D-glyceraldehyde 3-phosphate: step 4/5. In terms of biological role, catalyzes the reversible conversion of 2-phosphoglycerate (2-PG) into phosphoenolpyruvate (PEP). It is essential for the degradation of carbohydrates via glycolysis. The sequence is that of Enolase from Chlamydia abortus (strain DSM 27085 / S26/3) (Chlamydophila abortus).